Consider the following 404-residue polypeptide: Exodeoxyribonuclease 7 large subunit (404 aa).

Belongs to the XseA family. In terms of assembly, heterooligomer composed of large and small subunits.

It is found in the cytoplasm. It catalyses the reaction Exonucleolytic cleavage in either 5'- to 3'- or 3'- to 5'-direction to yield nucleoside 5'-phosphates.. Functionally, bidirectionally degrades single-stranded DNA into large acid-insoluble oligonucleotides, which are then degraded further into small acid-soluble oligonucleotides. This Fusobacterium nucleatum subsp. nucleatum (strain ATCC 25586 / DSM 15643 / BCRC 10681 / CIP 101130 / JCM 8532 / KCTC 2640 / LMG 13131 / VPI 4355) protein is Exodeoxyribonuclease 7 large subunit.